The following is a 164-amino-acid chain: Arginine repressor (164 aa).

Belongs to the ArgR family.

The protein resides in the cytoplasm. Its pathway is amino-acid biosynthesis; L-arginine biosynthesis [regulation]. Its function is as follows. Regulates arginine biosynthesis genes. This chain is Arginine repressor, found in Thermus thermophilus (strain ATCC BAA-163 / DSM 7039 / HB27).